We begin with the raw amino-acid sequence, 484 residues long: Putative myrosinase 6 (484 aa).

The N-linked (GlcNAc...) asparagine glycan is linked to Asn-28. A beta-D-glucoside-binding positions include Gln-39, His-140, and 184-185; that span reads NQ. Residues Cys-204 and Cys-207 are joined by a disulfide bond. N-linked (GlcNAc...) asparagine glycosylation occurs at Asn-260. A beta-D-glucoside is bound by residues Tyr-321, Trp-440, 447 to 448, and Phe-456; that span reads EF. An N-linked (GlcNAc...) asparagine glycan is attached at Asn-462.

The protein belongs to the glycosyl hydrolase 1 family.

The enzyme catalyses a thioglucoside + H2O = a sugar + a thiol.. In Arabidopsis thaliana (Mouse-ear cress), this protein is Putative myrosinase 6.